A 575-amino-acid polypeptide reads, in one-letter code: Thiol:disulfide interchange protein DsbD (575 aa).

The first 24 residues, 1-24, serve as a signal peptide directing secretion; sequence MIKRTLMLFLLLCSPLLTPAAANA. Intrachain disulfides connect Cys-126–Cys-132 and Cys-192–Cys-314. Transmembrane regions (helical) follow at residues 180–200, 216–236, 253–273, 297–317, 336–356, 367–387, 394–414, and 425–445; these read AILI…YPLI, IFWL…LLGL, YVLI…FGLY, LFGV…CTTA, GLTL…VTLF, WMQY…VFLL, AWGI…GFVL, and VIQL…QDWF. Positions 444 to 575 constitute a Thioredoxin domain; sequence WFWGTTVTQQ…FNEHLQHLPK (132 aa). Residues Cys-490 and Cys-493 are joined by a disulfide bond.

It belongs to the thioredoxin family. DsbD subfamily.

The protein localises to the cell inner membrane. The enzyme catalyses [protein]-dithiol + NAD(+) = [protein]-disulfide + NADH + H(+). The catalysed reaction is [protein]-dithiol + NADP(+) = [protein]-disulfide + NADPH + H(+). Required to facilitate the formation of correct disulfide bonds in some periplasmic proteins and for the assembly of the periplasmic c-type cytochromes. Acts by transferring electrons from cytoplasmic thioredoxin to the periplasm. This transfer involves a cascade of disulfide bond formation and reduction steps. This is Thiol:disulfide interchange protein DsbD from Photorhabdus laumondii subsp. laumondii (strain DSM 15139 / CIP 105565 / TT01) (Photorhabdus luminescens subsp. laumondii).